Here is a 515-residue protein sequence, read N- to C-terminus: Maturase K (515 aa).

It belongs to the intron maturase 2 family. MatK subfamily.

It is found in the plastid. It localises to the chloroplast. Its function is as follows. Usually encoded in the trnK tRNA gene intron. Probably assists in splicing its own and other chloroplast group II introns. The protein is Maturase K of Pinus cembra (Swiss stone pine).